Consider the following 242-residue polypeptide: MAKVSMRDMLQAGVHFGHQTRFWNPKMKPFIFGARNNVHIINLEKTVPMFDDALNYLSSVASKKGKILFVGTKRAATEAVKEAAANCEQFYVNHRWLGGMLTNWKTVRQSIKRLKDLEAQSLDGTFEKLTKKEALMRTREMEKLEKSLGGIKDMGGLPDVLFVIDADHEHIAIKEANNLGIPVVSIVDTNSNPDGVDYIIPGNDDAIRAVQLYLNAAADSIKTARELDIVVQAEQDGFVEAN.

The protein belongs to the universal ribosomal protein uS2 family.

In Tolumonas auensis (strain DSM 9187 / NBRC 110442 / TA 4), this protein is Small ribosomal subunit protein uS2.